We begin with the raw amino-acid sequence, 203 residues long: A-type ATP synthase subunit E (203 aa).

Belongs to the V-ATPase E subunit family. Has multiple subunits with at least A(3), B(3), C, D, E, F, H, I and proteolipid K(x).

It is found in the cell membrane. In terms of biological role, component of the A-type ATP synthase that produces ATP from ADP in the presence of a proton gradient across the membrane. The protein is A-type ATP synthase subunit E of Methanococcus maripaludis (strain DSM 14266 / JCM 13030 / NBRC 101832 / S2 / LL).